We begin with the raw amino-acid sequence, 129 residues long: Small ribosomal subunit protein uS11 (129 aa).

This sequence belongs to the universal ribosomal protein uS11 family. In terms of assembly, part of the 30S ribosomal subunit. Interacts with proteins S7 and S18. Binds to IF-3.

Functionally, located on the platform of the 30S subunit, it bridges several disparate RNA helices of the 16S rRNA. Forms part of the Shine-Dalgarno cleft in the 70S ribosome. This Nitrosomonas eutropha (strain DSM 101675 / C91 / Nm57) protein is Small ribosomal subunit protein uS11.